Here is a 122-residue protein sequence, read N- to C-terminus: Large ribosomal subunit protein uL14 (122 aa).

It belongs to the universal ribosomal protein uL14 family. In terms of assembly, part of the 50S ribosomal subunit. Forms a cluster with proteins L3 and L19. In the 70S ribosome, L14 and L19 interact and together make contacts with the 16S rRNA in bridges B5 and B8.

Binds to 23S rRNA. Forms part of two intersubunit bridges in the 70S ribosome. The protein is Large ribosomal subunit protein uL14 of Pseudomonas savastanoi pv. phaseolicola (strain 1448A / Race 6) (Pseudomonas syringae pv. phaseolicola (strain 1448A / Race 6)).